We begin with the raw amino-acid sequence, 585 residues long: A-type ATP synthase subunit A (585 aa).

231–238 contributes to the ATP binding site; the sequence is GPFGSGKT.

Belongs to the ATPase alpha/beta chains family. Has multiple subunits with at least A(3), B(3), C, D, E, F, H, I and proteolipid K(x).

Its subcellular location is the cell membrane. The catalysed reaction is ATP + H2O + 4 H(+)(in) = ADP + phosphate + 5 H(+)(out). In terms of biological role, produces ATP from ADP in the presence of a proton gradient across the membrane. The archaeal alpha chain is a catalytic subunit. Functionally, component of the A-type ATP synthase that produces ATP from ADP in the presence of a proton gradient across the membrane. The A chain is the catalytic subunit. The polypeptide is A-type ATP synthase subunit A (Thermococcus kodakarensis (strain ATCC BAA-918 / JCM 12380 / KOD1) (Pyrococcus kodakaraensis (strain KOD1))).